A 175-amino-acid chain; its full sequence is MDIAIHHPWIRRPFFPFHSPSRLFDQFFGEHLLESDLFPTSTSLSPFYLRPPSFLRAPSWFDTGLSEMRLEKDRFSVNLDVKHFSPEELKVKVLGDVIEVHGKHEERQDEHGFISREFHRKYRVPADVDPLTITSSLSSDGVLTVNGPRKQVSGPERTIPITREEKPAVTAAPKK.

Position 1 is an N-acetylmethionine (Met1). Residue Ser19 is modified to Phosphoserine. Ser41 carries O-linked (GlcNAc) serine glycosylation. 2 positions are modified to phosphoserine: Ser45 and Ser59. The sHSP domain maps to 56-164 (RAPSWFDTGL…PERTIPITRE (109 aa)). Residue His83 coordinates Zn(2+). N6-acetyllysine is present on Lys92. Residues His104, Glu106, His111, and His119 each contribute to the Zn(2+) site. Residues 142–175 (VLTVNGPRKQVSGPERTIPITREEKPAVTAAPKK) are disordered. Lys166 carries the N6-acetyllysine modification. O-linked (GlcNAc) threonine glycosylation is present at Thr170.

The protein belongs to the small heat shock protein (HSP20) family. As to quaternary structure, heteromer composed of three CRYAA and one CRYAB subunits. Aggregates with homologous proteins, including the small heat shock protein HSPB1, to form large heteromeric complexes. Inter-subunit bridging via zinc ions enhances stability, which is crucial as there is no protein turn over in the lens. Interacts with HSPBAP1 and TTN/titin. Interacts with TMEM109; in the cellular response to DNA damage. Interacts with DES; binds rapidly during early stages of DES filament assembly and a reduced binding seen in the later stages. Interacts with TMED10; the interaction mediates the translocation from the cytoplasm into the ERGIC (endoplasmic reticulum-Golgi intermediate compartment) and thereby secretion. Interacts with ATP6V1A and with MTOR, forming a ternary complex.

It is found in the cytoplasm. Its subcellular location is the nucleus. The protein localises to the secreted. The protein resides in the lysosome. In terms of biological role, may contribute to the transparency and refractive index of the lens. Has chaperone-like activity, preventing aggregation of various proteins under a wide range of stress conditions. In lens epithelial cells, stabilizes the ATP6V1A protein, preventing its degradation by the proteasome. This chain is Alpha-crystallin B chain (CRYAB), found in Macaca fascicularis (Crab-eating macaque).